The chain runs to 177 residues: MRSNTCVLEQHDSECINLILLVNATSFTKQQQQQHNFNYQRLQHRITPPPPPSSPLLPKKEFNSIDLSILDKQLYLDNNNNNNNNTINNNTNNIKKDNNDCDDDDDSKSDKNSDDDTNDSDVNSNNNNGNHQKKKINKKLKKDGTNHLKRFKKLNHIKKKLININSILVSNVSPINQ.

Composition is skewed to low complexity over residues 78-93 (NNNNNNNNTINNNTNN) and 120-130 (SDVNSNNNNGN). A disordered region spans residues 78–146 (NNNNNNNNTI…NKKLKKDGTN (69 aa)). A compositionally biased stretch (basic residues) spans 131–146 (HQKKKINKKLKKDGTN).

This is an uncharacterized protein from Dictyostelium discoideum (Social amoeba).